Consider the following 506-residue polypeptide: Cytochrome P450 monooxygenase BOA3 (506 aa).

Residues 15 to 35 form a helical membrane-spanning segment; that stretch reads IYLWIGFVLVVLLAYPTYFAI. C451 is a binding site for heme.

Belongs to the cytochrome P450 family. The cofactor is heme.

Its subcellular location is the membrane. Its pathway is polyketide biosynthesis. In terms of biological role, cytochrome P450 monooxygenase; part of the gene cluster A that mediates the biosynthesis of botcinic acid and its botcinin derivatives, acetate-derived polyketides that contribute to virulence when combined with the sesquiterpene botrydial. Botcinic acid and its derivatives have been shown to induce chlorosis and necrosis during host plant infection, but also have antifungal activities. Two polyketide synthases, BOA6 and BOA9, are involved in the biosynthesis of botcinins. BOA6 mediates the formation of the per-methylated tetraketide core by condensation of four units of malonyl-CoA with one unit of acetyl-CoA, which would be methylated in activated methylene groups to yield a bicyclic acid intermediate that could then either be converted to botrylactone derivatives or lose the starter acetate unit through a retro-Claisen type C-C bond cleavage to yield botcinin derivatives. The second polyketide synthase, BOA9, is probably required for the biosynthesis of the tetraketide side chain of botcinins. The methyltransferase (MT) domain within BOA6 is probably responsible for the incorporation of four methyl groups. The trans-enoyl reductase BOA5 might take over the enoyl reductase function of BOA6 that misses an ER domain. The monooxygenases BOA2, BOA3 and BOA4 might be involved in further hydroxylations at C4, C5 and C8, whereas BOA7, close to BOA9, could potentially be involved in the hydroxylation at C4 in the side chain of botcinins. The polypeptide is Cytochrome P450 monooxygenase BOA3 (Botryotinia fuckeliana (strain B05.10) (Noble rot fungus)).